The chain runs to 320 residues: Cytochrome f (320 aa).

An N-terminal signal peptide occupies residues methionine 1–alanine 35. Tyrosine 36, cysteine 56, cysteine 59, and histidine 60 together coordinate heme. A helical membrane pass occupies residues valine 286 to lysine 306.

This sequence belongs to the cytochrome f family. As to quaternary structure, the 4 large subunits of the cytochrome b6-f complex are cytochrome b6, subunit IV (17 kDa polypeptide, petD), cytochrome f and the Rieske protein, while the 4 small subunits are PetG, PetL, PetM and PetN. The complex functions as a dimer. It depends on heme as a cofactor.

The protein resides in the plastid. It localises to the chloroplast thylakoid membrane. Its function is as follows. Component of the cytochrome b6-f complex, which mediates electron transfer between photosystem II (PSII) and photosystem I (PSI), cyclic electron flow around PSI, and state transitions. The sequence is that of Cytochrome f from Buxus microphylla (Littleleaf boxwood).